We begin with the raw amino-acid sequence, 411 residues long: Solute carrier RCH1 (411 aa).

The Cytoplasmic portion of the chain corresponds to M1–K17. Residues V18–A38 form a helical membrane-spanning segment. The Extracellular portion of the chain corresponds to H39–R52. The chain crosses the membrane as a helical span at residues A53–M73. Residues S74 to F89 lie on the Cytoplasmic side of the membrane. The chain crosses the membrane as a helical span at residues T90 to I110. Residues K111–D120 lie on the Extracellular side of the membrane. A helical transmembrane segment spans residues W121 to V141. Over M142–D150 the chain is Cytoplasmic. The helical transmembrane segment at I151–L171 threads the bilayer. Residues L172–K204 are Extracellular-facing. A helical membrane pass occupies residues Q205–P225. Topologically, residues K226–S242 are cytoplasmic. A helical membrane pass occupies residues F243–T263. The Extracellular segment spans residues S264–S269. The chain crosses the membrane as a helical span at residues I270 to F290. Over Y291 to D329 the chain is Cytoplasmic. A helical transmembrane segment spans residues T330–S350. Residues S351–G361 are Extracellular-facing. The chain crosses the membrane as a helical span at residues I362 to V382. Over S383–K411 the chain is Cytoplasmic.

Belongs to the bile acid:sodium symporter (BASS) (TC 2.A.28) family.

Its subcellular location is the cell membrane. It localises to the bud neck. In terms of biological role, solute carrier protein that negatively regulates the cytosolic homeostasis in response to high levels of extracellular calcium. The polypeptide is Solute carrier RCH1 (Candida albicans (strain SC5314 / ATCC MYA-2876) (Yeast)).